Consider the following 432-residue polypeptide: RNA binding protein fox-1 homolog 2 (432 aa).

Residues 1-21 (MAEGGQAQQQPPQLGPGAAAR) are compositionally biased toward low complexity. The disordered stretch occupies residues 1–169 (MAEGGQAQQQ…STPKRLHVSN (169 aa)). Polar residues-rich tracts occupy residues 60 to 69 (QGNQEPTTTP) and 101 to 121 (YAGQ…PHGE). Residues 122–159 (QSSNSPSNQNGSLTQTEGGAQTDGQQSQTQSSENSESK) show a composition bias toward low complexity. One can recognise an RRM domain in the interval 163 to 239 (KRLHVSNIPF…RKIEVNNATA (77 aa)). Arginine 323 is modified (omega-N-methylarginine). Residues arginine 339 and arginine 371 each carry the asymmetric dimethylarginine modification. 2 positions are modified to asymmetric dimethylarginine; alternate: arginine 423 and arginine 428. 2 positions are modified to omega-N-methylarginine; alternate: arginine 423 and arginine 428.

Interacts with ER-alpha N-terminal activation domain. Interacts with RBPMS; the interaction allows cooperative assembly of stable cell-specific alternative splicing regulatory complexes.

It localises to the nucleus. It is found in the cytoplasm. RNA-binding protein that regulates alternative splicing events by binding to 5'-UGCAUGU-3' elements. Prevents binding of U2AF2 to the 3'-splice site. Regulates alternative splicing of tissue-specific exons and of differentially spliced exons during erythropoiesis. Seems to act as a coregulatory factor of ER-alpha. Together with RNA binding proteins RBPMS and MBNL1/2, activates vascular smooth muscle cells alternative splicing events. This chain is RNA binding protein fox-1 homolog 2 (Rbfox2), found in Rattus norvegicus (Rat).